The chain runs to 259 residues: Caffeoyl-CoA O-methyltransferase (259 aa).

Position 33 (lysine 33) interacts with substrate. Residues threonine 75, glutamate 97, glycine 99–valine 100, serine 105, aspartate 123, and alanine 152 each bind S-adenosyl-L-methionine. Aspartate 175 lines the substrate pocket. Residue aspartate 175 participates in a divalent metal cation binding. An S-adenosyl-L-methionine-binding site is contributed by aspartate 177. Positions 201 and 202 each coordinate a divalent metal cation. Residue asparagine 206 coordinates substrate.

This sequence belongs to the class I-like SAM-binding methyltransferase superfamily. Cation-dependent O-methyltransferase family. CCoAMT subfamily. A divalent metal cation serves as cofactor.

The catalysed reaction is (E)-caffeoyl-CoA + S-adenosyl-L-methionine = (E)-feruloyl-CoA + S-adenosyl-L-homocysteine + H(+). It functions in the pathway aromatic compound metabolism; phenylpropanoid biosynthesis. Methylates caffeoyl-CoA to feruloyl-CoA and 5-hydroxyferuloyl-CoA to sinapoyl-CoA. Plays a role in the synthesis of feruloylated polysaccharides. Involved in the reinforcement of the plant cell wall. Also involved in the responding to wounding or pathogen challenge by the increased formation of cell wall-bound ferulic acid polymers. The chain is Caffeoyl-CoA O-methyltransferase (CCOAOMT) from Pinus taeda (Loblolly pine).